The sequence spans 470 residues: Chromosomal replication initiator protein DnaA (470 aa).

Residues 1 to 89 (MIESNHVVLW…YNVMVDKTSI (89 aa)) are domain I, interacts with DnaA modulators. Positions 89 to 130 (IPNQTVNLEASNRSTAVTPKSIVGGNKAPSFLKAPAVQDLDP) are domain II. The interval 131 to 348 (HLNPNYNFEN…GIVIAIMARS (218 aa)) is domain III, AAA+ region. Gly-176, Gly-178, Lys-179, and Thr-180 together coordinate ATP. The domain IV, binds dsDNA stretch occupies residues 349–470 (TIFNKEIDLD…EIESLLKKKA (122 aa)).

Belongs to the DnaA family. Oligomerizes as a right-handed, spiral filament on DNA at oriC.

The protein localises to the cytoplasm. Plays an essential role in the initiation and regulation of chromosomal replication. ATP-DnaA binds to the origin of replication (oriC) to initiate formation of the DNA replication initiation complex once per cell cycle. Binds the DnaA box (a 9 base pair repeat at the origin) and separates the double-stranded (ds)DNA. Forms a right-handed helical filament on oriC DNA; dsDNA binds to the exterior of the filament while single-stranded (ss)DNA is stabiized in the filament's interior. The ATP-DnaA-oriC complex binds and stabilizes one strand of the AT-rich DNA unwinding element (DUE), permitting loading of DNA polymerase. After initiation quickly degrades to an ADP-DnaA complex that is not apt for DNA replication. Binds acidic phospholipids. This Bacteroides thetaiotaomicron (strain ATCC 29148 / DSM 2079 / JCM 5827 / CCUG 10774 / NCTC 10582 / VPI-5482 / E50) protein is Chromosomal replication initiator protein DnaA.